Here is a 120-residue protein sequence, read N- to C-terminus: Large ribosomal subunit protein uL22 (120 aa).

It belongs to the universal ribosomal protein uL22 family. Part of the 50S ribosomal subunit.

Its function is as follows. This protein binds specifically to 23S rRNA; its binding is stimulated by other ribosomal proteins, e.g. L4, L17, and L20. It is important during the early stages of 50S assembly. It makes multiple contacts with different domains of the 23S rRNA in the assembled 50S subunit and ribosome. In terms of biological role, the globular domain of the protein is located near the polypeptide exit tunnel on the outside of the subunit, while an extended beta-hairpin is found that lines the wall of the exit tunnel in the center of the 70S ribosome. In Oenococcus oeni (strain ATCC BAA-331 / PSU-1), this protein is Large ribosomal subunit protein uL22.